Consider the following 129-residue polypeptide: Sulfurtransferase TusD (129 aa).

Cys-79 functions as the Cysteine persulfide intermediate in the catalytic mechanism.

This sequence belongs to the DsrE/TusD family. In terms of assembly, heterohexamer, formed by a dimer of trimers. The hexameric TusBCD complex contains 2 copies each of TusB, TusC and TusD. The TusBCD complex interacts with TusE.

Its subcellular location is the cytoplasm. Its function is as follows. Part of a sulfur-relay system required for 2-thiolation of 5-methylaminomethyl-2-thiouridine (mnm(5)s(2)U) at tRNA wobble positions. Accepts sulfur from TusA and transfers it in turn to TusE. The polypeptide is Sulfurtransferase TusD (Pectobacterium carotovorum subsp. carotovorum (strain PC1)).